The chain runs to 118 residues: V-type proton ATPase subunit G 3 (118 aa).

A compositionally biased stretch (polar residues) spans Met1 to Leu12. Positions Met1–Thr44 are disordered. Residues Ser5–Lys53 are a coiled coil. The segment covering Ala14–Lys26 has biased composition (basic and acidic residues).

It belongs to the V-ATPase G subunit family. In terms of assembly, V-ATPase is a heteromultimeric enzyme made up of two complexes: the ATP-hydrolytic V1 complex and the proton translocation V0 complex. The V1 complex consists of three catalytic AB heterodimers that form a heterohexamer, three peripheral stalks each consisting of EG heterodimers, one central rotor including subunits D and F, and the regulatory subunits C and H. The proton translocation complex V0 consists of the proton transport subunit a, a ring of proteolipid subunits c9c'', rotary subunit d, subunits e and f, and the accessory subunits ATP6AP1/Ac45 and ATP6AP2/PRR. As to expression, kidney.

Subunit of the V1 complex of vacuolar(H+)-ATPase (V-ATPase), a multisubunit enzyme composed of a peripheral complex (V1) that hydrolyzes ATP and a membrane integral complex (V0) that translocates protons. V-ATPase is responsible for acidifying and maintaining the pH of intracellular compartments and in some cell types, is targeted to the plasma membrane, where it is responsible for acidifying the extracellular environment. This Mus musculus (Mouse) protein is V-type proton ATPase subunit G 3 (Atp6v1g3).